A 473-amino-acid polypeptide reads, in one-letter code: Tryptophanase (473 aa).

Lys270 is subject to N6-(pyridoxal phosphate)lysine.

The protein belongs to the beta-eliminating lyase family. As to quaternary structure, homotetramer. It depends on pyridoxal 5'-phosphate as a cofactor.

It carries out the reaction L-tryptophan + H2O = indole + pyruvate + NH4(+). Its pathway is amino-acid degradation; L-tryptophan degradation via pyruvate pathway; indole and pyruvate from L-tryptophan: step 1/1. The polypeptide is Tryptophanase (Vibrio vulnificus (strain CMCP6)).